The sequence spans 265 residues: Glutamate racemase (265 aa).

Residues 9–10 (DS) and 41–42 (YG) each bind substrate. Residue C72 is the Proton donor/acceptor of the active site. 73–74 (NT) serves as a coordination point for substrate. The active-site Proton donor/acceptor is the C183. 184–185 (TH) contacts substrate.

The protein belongs to the aspartate/glutamate racemases family.

The enzyme catalyses L-glutamate = D-glutamate. The protein operates within cell wall biogenesis; peptidoglycan biosynthesis. In terms of biological role, provides the (R)-glutamate required for cell wall biosynthesis. This is Glutamate racemase from Lysinibacillus sphaericus (strain C3-41).